Here is a 448-residue protein sequence, read N- to C-terminus: Probable glycine dehydrogenase (decarboxylating) subunit 1 (448 aa).

It belongs to the GcvP family. N-terminal subunit subfamily. The glycine cleavage system is composed of four proteins: P, T, L and H. In this organism, the P 'protein' is a heterodimer of two subunits.

It catalyses the reaction N(6)-[(R)-lipoyl]-L-lysyl-[glycine-cleavage complex H protein] + glycine + H(+) = N(6)-[(R)-S(8)-aminomethyldihydrolipoyl]-L-lysyl-[glycine-cleavage complex H protein] + CO2. Functionally, the glycine cleavage system catalyzes the degradation of glycine. The P protein binds the alpha-amino group of glycine through its pyridoxal phosphate cofactor; CO(2) is released and the remaining methylamine moiety is then transferred to the lipoamide cofactor of the H protein. The chain is Probable glycine dehydrogenase (decarboxylating) subunit 1 from Staphylococcus aureus (strain COL).